Consider the following 395-residue polypeptide: F-box/LRR-repeat protein 12 (395 aa).

An F-box domain is found at 13 to 61 (TSIIHLPDDCLSFIFQRLDSVADHDSFGLTCHRWLNIQNISRRSLQFQC). LRR repeat units follow at residues 75-100 (NPDVSSHHLHRLLTRFQWLEHLSLSG), 101-126 (CTVLNDSSLDSLRYPGARLHTLYLDC), 127-152 (CFGISDDGISTIASFCPNLSVVSLYR), 154-177 (NISDIGLETLARASLSLKCVNLSY), 178-203 (CPLVSDFGIKALSQACLQLESVKISN), 226-250 (SCQLEPKGITGIISGGGIEFLNISG), 252-278 (SCYIRKDGLVPIGSGIASKLRILNLRM), 279-304 (CRTVGDESIEAIAKGCPLLQEWNLAL), 305-330 (CHEVKISGWEAVGKWCRNLKKLHVNR), and 331-356 (CRNLCDQGLLALRCGCMNLQILYMNG).

This is F-box/LRR-repeat protein 12 (FBL12) from Arabidopsis thaliana (Mouse-ear cress).